A 126-amino-acid polypeptide reads, in one-letter code: Fluoride-specific ion channel FluC (126 aa).

Helical transmembrane passes span 4–24 (LLLV…TSAW), 36–56 (GTLL…TASL), 67–85 (LFLA…SFNY), and 101–121 (AYLL…TLLV). Positions 75 and 78 each coordinate Na(+).

The protein belongs to the fluoride channel Fluc/FEX (TC 1.A.43) family.

It localises to the cell inner membrane. The catalysed reaction is fluoride(in) = fluoride(out). Its activity is regulated as follows. Na(+) is not transported, but it plays an essential structural role and its presence is essential for fluoride channel function. Its function is as follows. Fluoride-specific ion channel. Important for reducing fluoride concentration in the cell, thus reducing its toxicity. This chain is Fluoride-specific ion channel FluC, found in Anaeromyxobacter sp. (strain K).